Here is a 123-residue protein sequence, read N- to C-terminus: MIQPQTLLNVADNSGARKLMCIRVIGTAGNQRYARIGDVIVAVIKDAVPQMPLERSEVIRAVIVRTCKEFKCEDGIIIRYDDNAAVIIDQKGNPKGTRVFGAITEELRELNFTKIVSLAPEVL.

This sequence belongs to the universal ribosomal protein uL14 family. In terms of assembly, part of the 50S ribosomal subunit.

It localises to the plastid. The protein localises to the chloroplast. In terms of biological role, binds to 23S rRNA. The sequence is that of Large ribosomal subunit protein uL14c from Brachypodium distachyon (Purple false brome).